Here is a 457-residue protein sequence, read N- to C-terminus: MNNNKRSKLSTVPSSRPIRVGFVGLTSGKSWVAKTHFLAIQQLSSQFQIVALYNPTLKSSLQTIEQLQLKHATGFDSLESFAQYKDIDMIVVSVKVPEHYEVVKNILEHSSQNLNLRYLYVEWALAASVQQAEELYSISQQRANLQTIICLQGRKSPYIVRAKELISEGCIGDINSIEISGNGGWYGYERPMRSPEYLYDIESGVNLISNSFGHTIDVLQYITGSYFQKINAMISNNIPTQFLLDENGKRTKETISKTCPDHLLFQGILENGKVPVSCSFKGGTPVKKLTKNLVIDIHGTKGDLKIEGDAGFVEISNLVLYFYGIKNGNGSSNGTDNNGAAAIKDKEKVTKSPSPSTGTSEEEQTMEVFHLRNYNSVVGNILRIYESIADYHFLGKPESKSSRGPDDLFASTKFDKQGFRFEGFPTFKDAIILHRLIDAVFRSDKEEKTLDVSKIMI.

Residues 333-364 are disordered; sequence NGTDNNGAAAIKDKEKVTKSPSPSTGTSEEEQ.

It to yeast GAL80.

Its function is as follows. This protein is a negative regulator for the gene expression of the lactose/galactose metabolic genes. It seems to block activation by the transcriptional activator LAC9 in the absence of an inducing sugar. This is Galactose/lactose metabolism regulatory protein GAL80 (GAL80) from Kluyveromyces lactis (strain ATCC 8585 / CBS 2359 / DSM 70799 / NBRC 1267 / NRRL Y-1140 / WM37) (Yeast).